Consider the following 471-residue polypeptide: tRNA modification GTPase MnmE (471 aa).

The (6S)-5-formyl-5,6,7,8-tetrahydrofolate site is built by R26, E83, and K136. A TrmE-type G domain is found at 232–393 (GLRVVLAGQP…LRRRLLQLAG (162 aa)). N242 is a binding site for K(+). Residues 242 to 247 (NVGKSS), 261 to 267 (TPIAGTT), 286 to 289 (DTAG), 354 to 357 (NKAD), and 374 to 376 (SAR) contribute to the GTP site. A Mg(2+)-binding site is contributed by S246. T261, I263, and T266 together coordinate K(+). Mg(2+) is bound at residue T267. Residue K471 participates in (6S)-5-formyl-5,6,7,8-tetrahydrofolate binding.

Belongs to the TRAFAC class TrmE-Era-EngA-EngB-Septin-like GTPase superfamily. TrmE GTPase family. In terms of assembly, homodimer. Heterotetramer of two MnmE and two MnmG subunits. K(+) serves as cofactor.

Its subcellular location is the cytoplasm. Functionally, exhibits a very high intrinsic GTPase hydrolysis rate. Involved in the addition of a carboxymethylaminomethyl (cmnm) group at the wobble position (U34) of certain tRNAs, forming tRNA-cmnm(5)s(2)U34. The protein is tRNA modification GTPase MnmE of Methylibium petroleiphilum (strain ATCC BAA-1232 / LMG 22953 / PM1).